Here is a 457-residue protein sequence, read N- to C-terminus: GTPase Der (457 aa).

2 consecutive EngA-type G domains span residues 4–169 and 177–352; these read PTIA…PENN and IMMS…NQHR. GTP contacts are provided by residues 10–17, 57–61, 120–123, 183–190, 230–234, and 295–298; these read GRPNVGKS, DTGGL, NKCE, DTAGI, and NKWD. One can recognise a KH-like domain in the interval 353-438; the sequence is RRVTTSVVNE…PLILLWRGKQ (86 aa).

The protein belongs to the TRAFAC class TrmE-Era-EngA-EngB-Septin-like GTPase superfamily. EngA (Der) GTPase family. In terms of assembly, associates with the 50S ribosomal subunit.

Functionally, GTPase that plays an essential role in the late steps of ribosome biogenesis. The protein is GTPase Der of Prochlorococcus marinus (strain MIT 9215).